Here is a 248-residue protein sequence, read N- to C-terminus: GPN-loop GTPase PAB0955 (248 aa).

10–15 (GSGKTT) lines the GTP pocket. A Gly-Pro-Asn (GPN)-loop; involved in dimer interface motif is present at residues 65-67 (GPN). Residues 165-168 (NKVD) and Ala224 contribute to the GTP site.

This sequence belongs to the GPN-loop GTPase family. As to quaternary structure, homodimer. Interacts with DNA topoisomerase VI subunit B (top6B), DNA primase DnaG and RF-C.

In terms of biological role, small GTPase that may be involved in genome maintenance. Has weak intrinsic GTPase activity but displays no ATPase activity. This chain is GPN-loop GTPase PAB0955, found in Pyrococcus abyssi (strain GE5 / Orsay).